The chain runs to 488 residues: Kelch-like protein 15 (488 aa).

Residues 31 to 98 (LDVTLVIEDH…MYYGTIELSM (68 aa)) enclose the BTB domain. Residues 133–237 (CAEIMRLLDD…TPSSVFEKVK (105 aa)) enclose the BACK domain. 3 Kelch repeats span residues 328-379 (FVFL…VIGR), 381-426 (VYAV…VLGN), and 428-473 (LYIT…NKCK).

In terms of assembly, homodimer. Interacts with CUL3.

The protein resides in the nucleus. It functions in the pathway protein modification; protein ubiquitination. In terms of biological role, substrate-specific adapter for CUL3 E3 ubiquitin-protein ligase complex. This Gallus gallus (Chicken) protein is Kelch-like protein 15 (KLHL15).